The sequence spans 321 residues: Annexin A5 (321 aa).

Annexin repeat units follow at residues 15–86, 87–158, 170–242, and 246–317; these read FDAR…SLMR, PARI…VLLQ, ALVE…AVVK, and SVPA…LLCG.

Belongs to the annexin family.

In terms of biological role, collagen-binding protein. The chain is Annexin A5 (ANXA5) from Gallus gallus (Chicken).